We begin with the raw amino-acid sequence, 130 residues long: Protein UL145 (130 aa).

As to quaternary structure, interacts with host DDB1; this interaction promotes STAT2 degradation.

Functionally, plays a role in the inhibition of host innate immunity by exploiting host DDB1-cullin RING ubiquitin ligases (CRLs). Mechanistically, recruits host DDB1 via a DCAF-like interaction motif to antagonize IFN signaling by STAT2 degradation. This is Protein UL145 (UL145) from Homo sapiens (Human).